Reading from the N-terminus, the 1221-residue chain is Fibulin-2 (1221 aa).

Positions 1–26 are cleaved as a signal peptide; the sequence is MLLQESAGVWLALALVTALTPSPSMA. The interval 27–176 is subdomain NA (Cys-rich); it reads VPWQDCTGAE…ELICYQLPGC (150 aa). Residues 27-434 form a n region; sequence VPWQDCTGAE…DGSTKDLIET (408 aa). The segment at 177-434 is subdomain NB (Cys-free); the sequence is HGNFSDAEEG…DGSTKDLIET (258 aa). N-linked (GlcNAc...) asparagine glycosylation occurs at N179. 2 disordered regions span residues 248–329 and 341–399; these read PTAA…LIPD and GAAP…PQHP. Over residues 270–283 the composition is skewed to acidic residues; that stretch reads DTEEDEEEEEEETL. Residues 312–322 show a composition bias toward basic and acidic residues; sequence QEKEAEAKAGP. Positions 421–423 match the Cell attachment site motif; it reads RGD. Cystine bridges form between C435/C462, C436/C469, C449/C470, C479/C508, C492/C509, C511/C535, C512/C542, C525/C543, C598/C610, C606/C619, and C621/C634. Anaphylatoxin-like domains are found at residues 435-477, 478-510, and 511-543; these read CCAA…LKEK, SCVAGVMGAKEGETCGAEDNDTCGVSLYKQCCD, and CCGLGLRVRAEGQSCESNPNLGYPCNHVMLSCC. An N-linked (GlcNAc...) asparagine glycan is attached at N497. The EGF-like 1; calcium-binding domain occupies 594 to 635; it reads DQDECLMLPGELCQHLCINTVGSYRCACFPGFELQGDGRTCR. The tract at residues 633 to 661 is disordered; the sequence is TCRPDRGAPQLDTARESAPRSESAQVSPN. Polar residues predominate over residues 652–661; that stretch reads RSESAQVSPN. One can recognise an EGF-like 2 domain in the interval 669–708; the sequence is QPNTCKDNGPCRQVCRVVGDTAMCSCFPGYAIMADGVSCE. 5 disulfide bridges follow: C673–C683, C679–C692, C694–C707, C713–C726, and C720–C735. Residues 709 to 755 form the EGF-like 3; calcium-binding domain; sequence DQDECLMGTHDCSWKQFCVNTLGSFYCVNHTVLCAEGYILNAHRKCV. N737 is a glycosylation site (N-linked (GlcNAc...) asparagine). A disulfide bond links C742 and C754. Positions 756 to 800 constitute an EGF-like 4; calcium-binding domain; it reads DINECVTDLHTCTRAEHCVNTPGSFQCYKALTCEPGYVLTDGECT. The region spanning 801–846 is the EGF-like 5; calcium-binding domain; that stretch reads DVDECVTGTHNCQAGFSCQNTKGSFYCQARQRCMDGFLQDPEGNCV. 3 disulfide bridges follow: C805/C818, C812/C827, and C833/C845. The EGF-like 6; calcium-binding domain occupies 847–894; that stretch reads DINECTSLLEPCRSGFSCINTVGSYTCQRNPLVCGRGYHANEEGSECV. One can recognise an EGF-like 7; calcium-binding domain in the interval 895 to 937; it reads DVNECETGVHRCGEGQLCYNLPGSYRCDCKPGFQRDAFGRTCI. 15 disulfides stabilise this stretch: C899–C912, C906–C921, C923–C936, C942–C954, C950–C963, C965–C978, C984–C993, C989–C1002, C1004–C1017, C1023–C1035, C1031–C1044, C1046–C1060, C1066–C1079, C1073–C1088, and C1093–C1105. The 42-residue stretch at 938 to 979 folds into the EGF-like 8; calcium-binding domain; sequence DVNECWVSPGRLCQHTCENTPGSYRCSCAAGFLLAADGKHCE. One can recognise an EGF-like 9; calcium-binding domain in the interval 980 to 1018; sequence DVNECETRRCSQECANIYGSYQCYCRQGYQLAEDGHTCT. The 43-residue stretch at 1019-1061 folds into the EGF-like 10; calcium-binding domain; it reads DIDECAQGAGILCTFRCVNVPGSYQCACPEQGYTMMANGRSCK. The 45-residue stretch at 1062 to 1106 folds into the EGF-like 11; calcium-binding domain; the sequence is DLDECALGTHNCSEAETCHNIQGSFRCLRFDCPPNYVRVSETKCE. N1072 is a glycosylation site (N-linked (GlcNAc...) asparagine). The interval 1111 to 1221 is domain III; sequence QDITECQTSP…MYIFFTTFAP (111 aa).

The protein belongs to the fibulin family. In terms of assembly, homotrimer; disulfide-linked. Interacts with LAMA2. Interacts with FBN1 (via N-terminal domain). Forms a ternary complex with ELN and FBN1. Component of both basement membranes and other connective tissues.

Its subcellular location is the secreted. The protein resides in the extracellular space. The protein localises to the extracellular matrix. Its binding to fibronectin and some other ligands is calcium dependent. May act as an adapter that mediates the interaction between FBN1 and ELN. The polypeptide is Fibulin-2 (Fbln2) (Mus musculus (Mouse)).